A 368-amino-acid chain; its full sequence is DNA-dependent metalloprotease dvc-1 (368 aa).

In terms of domain architecture, SprT-like spans 21-190 (HALFIQFDAR…QSCGGNFLKV (170 aa)). His89 provides a ligand contact to Zn(2+). Glu90 is a catalytic residue. 2 residues coordinate Zn(2+): His93 and His108. A disordered region spans residues 187–309 (FLKVKEPEGY…PVNFTSPSSA (123 aa)). The span at 226–237 (TLDDFFKKDGKN) shows a compositional bias: basic and acidic residues. The segment covering 238-274 (SSDNSTSKSPTKPSTSLFTGSGQKLGGSSSTSSLLNS) has biased composition (low complexity). The segment at 344-368 (SVICPSCNTEVMENLIHGHLDYCLG) adopts a UBZ4-type zinc-finger fold. Positions 347, 350, 362, and 366 each coordinate Zn(2+).

It belongs to the Spartan family. Interacts with vcp/p97 (cdc-48.1 or cdc-48.2).

The protein resides in the nucleus. The protein localises to the chromosome. Functionally, DNA-dependent metalloendopeptidase that mediates the proteolytic cleavage of covalent DNA-protein cross-links (DPCs) during DNA synthesis, thereby playing a key role in maintaining genomic integrity. DPCs are highly toxic DNA lesions that interfere with essential chromatin transactions, such as replication and transcription, and which are induced by reactive agents, such as UV light or formaldehyde. Associates with the DNA replication machinery and specifically removes DPCs during DNA synthesis. Regulator of UV-induced DNA damage response: required to protect genome stability during DNA replication, possibly via recruitment of vcp/p97 (cdc-48.1 or cdc-48.2) recruitment. The sequence is that of DNA-dependent metalloprotease dvc-1 from Caenorhabditis elegans.